Here is a 632-residue protein sequence, read N- to C-terminus: Biosynthetic arginine decarboxylase (632 aa).

Lys-101 bears the N6-(pyridoxal phosphate)lysine mark. Position 281–291 (Phe-281–Tyr-291) interacts with substrate.

It belongs to the Orn/Lys/Arg decarboxylase class-II family. SpeA subfamily. Mg(2+) serves as cofactor. The cofactor is pyridoxal 5'-phosphate.

The catalysed reaction is L-arginine + H(+) = agmatine + CO2. It participates in amine and polyamine biosynthesis; agmatine biosynthesis; agmatine from L-arginine: step 1/1. Its function is as follows. Catalyzes the biosynthesis of agmatine from arginine. In Salmonella dublin (strain CT_02021853), this protein is Biosynthetic arginine decarboxylase.